Consider the following 354-residue polypeptide: Dihydroorotate dehydrogenase (quinone) (354 aa).

FMN contacts are provided by residues 61–65 (AGYDK) and alanine 85. Lysine 65 contacts substrate. Residue 110 to 114 (NRFGF) coordinates substrate. Residues asparagine 139 and asparagine 170 each coordinate FMN. A substrate-binding site is contributed by asparagine 170. Catalysis depends on serine 173, which acts as the Nucleophile. Asparagine 175 contributes to the substrate binding site. Residues lysine 211 and threonine 239 each coordinate FMN. 240-241 (NT) is a substrate binding site. FMN contacts are provided by residues glycine 261, glycine 290, and 311-312 (YT).

It belongs to the dihydroorotate dehydrogenase family. Type 2 subfamily. Monomer. Requires FMN as cofactor.

It is found in the cell membrane. The catalysed reaction is (S)-dihydroorotate + a quinone = orotate + a quinol. The protein operates within pyrimidine metabolism; UMP biosynthesis via de novo pathway; orotate from (S)-dihydroorotate (quinone route): step 1/1. In terms of biological role, catalyzes the conversion of dihydroorotate to orotate with quinone as electron acceptor. This is Dihydroorotate dehydrogenase (quinone) from Cereibacter sphaeroides (strain ATCC 17023 / DSM 158 / JCM 6121 / CCUG 31486 / LMG 2827 / NBRC 12203 / NCIMB 8253 / ATH 2.4.1.) (Rhodobacter sphaeroides).